Reading from the N-terminus, the 433-residue chain is N-lysine methyltransferase SMYD2 (433 aa).

The region spanning 7-241 (GGLERFCSPG…PGEEVFTSYI (235 aa)) is the SET domain. S-adenosyl-L-methionine is bound at residue 17-19 (KGR). 8 residues coordinate Zn(2+): cysteine 52, cysteine 55, cysteine 65, cysteine 68, cysteine 74, cysteine 78, histidine 86, and cysteine 90. The segment at 52–90 (CEFCFARKEGLSKCGRCKQAFYCNVECQREDWPMHKLEC) adopts an MYND-type zinc-finger fold. S-adenosyl-L-methionine contacts are provided by residues histidine 137, 206–207 (NH), and 258–260 (YFF).

It belongs to the class V-like SAM-binding methyltransferase superfamily. As to quaternary structure, interacts with RNA polymerase II and HELZ. Interacts with SIN3A and HDAC1. Interacts (via MYND-type zinc finger) with EPB41L3. Interacts (via SET domain) with p53/TP53. Interacts with RB1 and HSP90AA1.

The protein localises to the cytoplasm. The protein resides in the cytosol. Its subcellular location is the nucleus. The catalysed reaction is L-lysyl(4)-[histone H3] + 3 S-adenosyl-L-methionine = N(6),N(6),N(6)-trimethyl-L-lysyl(4)-[histone H3] + 3 S-adenosyl-L-homocysteine + 3 H(+). It catalyses the reaction L-lysyl-[protein] + S-adenosyl-L-methionine = N(6)-methyl-L-lysyl-[protein] + S-adenosyl-L-homocysteine + H(+). Functionally, protein-lysine N-methyltransferase that methylates both histones and non-histone proteins, including p53/TP53 and RB1. Specifically trimethylates histone H3 'Lys-4' (H3K4me3) in vivo. The activity requires interaction with HSP90alpha. Shows even higher methyltransferase activity on p53/TP53. Monomethylates 'Lys-370' of p53/TP53, leading to decreased DNA-binding activity and subsequent transcriptional regulation activity of p53/TP53. Monomethylates RB1 at 'Lys-860'. This is N-lysine methyltransferase SMYD2 (SMYD2) from Bos taurus (Bovine).